The following is a 238-amino-acid chain: MSEKPDLRQRCSDIYREIKEKKLTVVKQGAEAITIKTEFYPGEVCLLKCRPAKRWRHPILDQKLSRKRCLVEARLLAKCHYVGIKCPMLYFIDANRGQIYMEWIDGPCVRDYIREICECEIEKKLIPLMKRIGSEVAKMHKNDIVHGDLTTSNMMLESHNNPVPIFIDFGLGSVSESEEDKAVDIYVLERALSSTLPESESLFHHVLDSYAQSWKQSKATLRRFEEVRMRGRKRTMIG.

Positions 20-238 (EKKLTVVKQG…MRGRKRTMIG (219 aa)) constitute a Protein kinase domain. Residues 26–34 (VKQGAEAIT) and Lys48 each bind ATP. Asp148 acts as the Proton acceptor in catalysis.

This sequence belongs to the protein kinase superfamily. BUD32 family. Component of the EKC/KEOPS complex composed of at least SPAP27G11.07c/BUD32, cgi121, gon7, pgp2 and SPAC4H3.13/PCC1; the whole complex dimerizes.

The protein localises to the cytoplasm. It is found in the nucleus. Its subcellular location is the chromosome. It localises to the telomere. The enzyme catalyses L-seryl-[protein] + ATP = O-phospho-L-seryl-[protein] + ADP + H(+). The catalysed reaction is L-threonyl-[protein] + ATP = O-phospho-L-threonyl-[protein] + ADP + H(+). Functionally, component of the EKC/KEOPS complex that is required for the formation of a threonylcarbamoyl group on adenosine at position 37 (t(6)A37) in tRNAs that read codons beginning with adenine. The complex is probably involved in the transfer of the threonylcarbamoyl moiety of threonylcarbamoyl-AMP (TC-AMP) to the N6 group of A37. BUD32 has ATPase activity in the context of the EKC/KEOPS complex and likely plays a supporting role to the catalytic subunit KAE1. The EKC/KEOPS complex also promotes both telomere uncapping and telomere elongation. The complex is required for efficient recruitment of transcriptional coactivators. The sequence is that of EKC/KEOPS complex subunit SPAP27G11.07c from Schizosaccharomyces pombe (strain 972 / ATCC 24843) (Fission yeast).